Reading from the N-terminus, the 301-residue chain is Diaminopimelate epimerase (301 aa).

Positions 15, 47, and 67 each coordinate substrate. C76 acts as the Proton donor in catalysis. Substrate is bound by residues 77-78 (GN), N163, N197, and 215-216 (ER). C224 serves as the catalytic Proton acceptor. 225–226 (GS) contacts substrate.

Belongs to the diaminopimelate epimerase family. As to quaternary structure, homodimer.

The protein resides in the cytoplasm. It carries out the reaction (2S,6S)-2,6-diaminopimelate = meso-2,6-diaminopimelate. It functions in the pathway amino-acid biosynthesis; L-lysine biosynthesis via DAP pathway; DL-2,6-diaminopimelate from LL-2,6-diaminopimelate: step 1/1. Its function is as follows. Catalyzes the stereoinversion of LL-2,6-diaminopimelate (L,L-DAP) to meso-diaminopimelate (meso-DAP), a precursor of L-lysine and an essential component of the bacterial peptidoglycan. The protein is Diaminopimelate epimerase of Rhizobium etli (strain ATCC 51251 / DSM 11541 / JCM 21823 / NBRC 15573 / CFN 42).